The sequence spans 212 residues: Transmembrane protein 186 (212 aa).

The Mitochondrial matrix portion of the chain corresponds to 1-78 (MAAVLRAVAR…YLSRLKVAQT (78 aa)). The helical transmembrane segment at 79–99 (ALTVAALPPGLYCYSQGLMPF) threads the bilayer. Topologically, residues 100-101 (SS) are mitochondrial intermembrane. Residues 102–122 (LCLAGGVAGFALAMLCWMSHF) form a helical membrane-spanning segment. Over 123-212 (FRRLVGILYV…QVFGVLDALK (90 aa)) the chain is Mitochondrial matrix.

The protein belongs to the TMEM186 family. Part of the mitochondrial complex I assembly/MCIA complex that comprises at least the core subunits TMEM126B, NDUFAF1, ECSIT and ACAD9 and complement subunits such as COA1 and TMEM186. Interacts with MT-ND3.

It localises to the mitochondrion inner membrane. Its function is as follows. As part of the MCIA complex, required for efficient assembly of the mitochondrial complex I. This is Transmembrane protein 186 from Bos taurus (Bovine).